The primary structure comprises 434 residues: Methylenetetrahydrofolate--tRNA-(uracil-5-)-methyltransferase TrmFO (434 aa).

An FAD-binding site is contributed by 9–14 (GAGLAG).

The protein belongs to the MnmG family. TrmFO subfamily. The cofactor is FAD.

The protein resides in the cytoplasm. The catalysed reaction is uridine(54) in tRNA + (6R)-5,10-methylene-5,6,7,8-tetrahydrofolate + NADH + H(+) = 5-methyluridine(54) in tRNA + (6S)-5,6,7,8-tetrahydrofolate + NAD(+). It carries out the reaction uridine(54) in tRNA + (6R)-5,10-methylene-5,6,7,8-tetrahydrofolate + NADPH + H(+) = 5-methyluridine(54) in tRNA + (6S)-5,6,7,8-tetrahydrofolate + NADP(+). Functionally, catalyzes the folate-dependent formation of 5-methyl-uridine at position 54 (M-5-U54) in all tRNAs. This Fusobacterium nucleatum subsp. nucleatum (strain ATCC 25586 / DSM 15643 / BCRC 10681 / CIP 101130 / JCM 8532 / KCTC 2640 / LMG 13131 / VPI 4355) protein is Methylenetetrahydrofolate--tRNA-(uracil-5-)-methyltransferase TrmFO.